Here is a 542-residue protein sequence, read N- to C-terminus: CTP synthase (542 aa).

Positions M1–M265 are amidoligase domain. S13 is a binding site for CTP. S13 lines the UTP pocket. An ATP-binding site is contributed by S14–L19. Y54 is a binding site for L-glutamine. An ATP-binding site is contributed by D71. Positions 71 and 139 each coordinate Mg(2+). Residues D146–E148, K186–Q191, and K222 contribute to the CTP site. Residues K186–Q191 and K222 each bind UTP. The 251-residue stretch at T291–L541 folds into the Glutamine amidotransferase type-1 domain. G353 is a binding site for L-glutamine. Residue C380 is the Nucleophile; for glutamine hydrolysis of the active site. Residues F381–Q384, E404, and R469 each bind L-glutamine. Catalysis depends on residues H514 and E516.

It belongs to the CTP synthase family. As to quaternary structure, homotetramer.

It carries out the reaction UTP + L-glutamine + ATP + H2O = CTP + L-glutamate + ADP + phosphate + 2 H(+). The catalysed reaction is L-glutamine + H2O = L-glutamate + NH4(+). The enzyme catalyses UTP + NH4(+) + ATP = CTP + ADP + phosphate + 2 H(+). The protein operates within pyrimidine metabolism; CTP biosynthesis via de novo pathway; CTP from UDP: step 2/2. Allosterically activated by GTP, when glutamine is the substrate; GTP has no effect on the reaction when ammonia is the substrate. The allosteric effector GTP functions by stabilizing the protein conformation that binds the tetrahedral intermediate(s) formed during glutamine hydrolysis. Inhibited by the product CTP, via allosteric rather than competitive inhibition. Catalyzes the ATP-dependent amination of UTP to CTP with either L-glutamine or ammonia as the source of nitrogen. Regulates intracellular CTP levels through interactions with the four ribonucleotide triphosphates. The polypeptide is CTP synthase (Rhodospirillum centenum (strain ATCC 51521 / SW)).